Consider the following 202-residue polypeptide: Transcription factor IBH1 (202 aa).

A compositionally biased stretch (pro residues) spans 1-16 (MDAKRTPPPPTPPNPN). Positions 1–33 (MDAKRTPPPPTPPNPNPSVIGSGAAADGGGFGR) are disordered. Positions 136–185 (TSAAARAVPPPPRQQGEPPRADALRRLVPGGAGMEYSSLLEETADYLRSL) constitute a bHLH domain.

The protein belongs to the bHLH protein family. In terms of assembly, interacts with ILI1.

Its function is as follows. Atypical and probable non DNA-binding bHLH transcription factor that acts as a negative regulator of cell elongation and plant development. Binds the transcription factor ILI1 and forms a heterodimer of antagonistic bHLH transcription factors that function downstream of BZR1 to mediate brassinosteroid regulation of cell elongation and lamina inclination. This chain is Transcription factor IBH1 (IBH1), found in Oryza sativa subsp. indica (Rice).